A 515-amino-acid chain; its full sequence is MDEFHRNGKEDSSWQQCFLYPLFFQEDLYAIYHDHYLDGSSSSEPMEHVSSNDQFSFLTVKRLIGQIRQQNHSIFLFVNRDPNPLVDRNKSSYSESVLEGLTLVLEVPFSIRSKNSVEGINEWKSFRSIHSIFPFLEDKFPHSNYISDTRIPYSIHPEILVRTFRRWIRDAPSLHLLRSVLYEYRNSSENLQRSLIVAPRVNTRFFLFLWNHYVYECESILVPLLKRSSHSRSLSHGSFPERTHFNRKIKHILIFSRRNSLKRIWSLKDPNIHYVRYGERSIIAIKGTHLLVKKCRYHLLIFRQCYFHLWFEPYRVCSHQLSKNCSSSLGYFLRIRMKPLLVRTKMLDELFIADLITGEFDPIVPIIPIIGLLAREKFCDISGRPISKLSWTSLTDDDILDRFDRIWRNIFHYYSGSFGRDGLYRIKYILSLSCAKTLACKHKSTIRVVRKELGPELFKKSFSKEREFDSPPFSSKSGARSQRERIWHSDIPQINPLANSWQKIQDLKVENLFDQ.

It belongs to the intron maturase 2 family. MatK subfamily.

It is found in the plastid. Its subcellular location is the chloroplast. Usually encoded in the trnK tRNA gene intron. Probably assists in splicing its own and other chloroplast group II introns. The sequence is that of Maturase K from Pseudotsuga menziesii (Douglas-fir).